The primary structure comprises 57 residues: Potassium channel toxin alpha-KTx 1.5 (57 aa).

Residues 1-20 form the signal peptide; the sequence is MKISFLLLALVICSIGWSEA. Residue Gln21 is modified to Pyrrolidone carboxylic acid. Intrachain disulfides connect Cys27–Cys48, Cys33–Cys53, and Cys37–Cys55.

Belongs to the short scorpion toxin superfamily. Potassium channel inhibitor family. Alpha-KTx 01 subfamily. In terms of tissue distribution, expressed by the venom gland.

The protein localises to the secreted. Its function is as follows. Potent blocker of both large-conductance calcium-activated potassium channels (KCa1.1/KCNMA1) and voltage-gated potassium channels (Kv1.3/KCNA3). Has also been shown to moderately inhibit Kv1.2/KCNA2 and weakly inhibit Kv1.1/KCNA1 channels, as well as 5-hydroxytryptamine 3 receptors (HTR3A). In Olivierus martensii (Manchurian scorpion), this protein is Potassium channel toxin alpha-KTx 1.5.